The following is a 360-amino-acid chain: Aminomethyltransferase (360 aa).

Belongs to the GcvT family. As to quaternary structure, the glycine cleavage system is composed of four proteins: P, T, L and H.

The enzyme catalyses N(6)-[(R)-S(8)-aminomethyldihydrolipoyl]-L-lysyl-[protein] + (6S)-5,6,7,8-tetrahydrofolate = N(6)-[(R)-dihydrolipoyl]-L-lysyl-[protein] + (6R)-5,10-methylene-5,6,7,8-tetrahydrofolate + NH4(+). Functionally, the glycine cleavage system catalyzes the degradation of glycine. The chain is Aminomethyltransferase from Pseudomonas putida (strain ATCC 47054 / DSM 6125 / CFBP 8728 / NCIMB 11950 / KT2440).